Reading from the N-terminus, the 149-residue chain is Stathmin (149 aa).

At alanine 2 the chain carries N-acetylalanine. Position 4 is a phosphoserine (serine 4). An SLD domain is found at 4–145 (SDIQVKELEK…NKESKDPADE (142 aa)). The residue at position 9 (lysine 9) is an N6-acetyllysine. Residue serine 16 is modified to Phosphoserine; by PKA. Phosphoserine; by CDK1, MAPK1 and MAPK3 is present on serine 25. The segment at 27–46 (RSKESVPDFPLSPPKKKDLS) is disordered. Lysine 29 carries the N6-methyllysine modification. Phosphoserine is present on serine 31. Serine 38 carries the post-translational modification Phosphoserine; by CDK1, MAPK1 and MAPK3. A coiled-coil region spans residues 41-140 (KKKDLSLEEI…EEVRKNKESK (100 aa)). A Phosphoserine; by PKA modification is found at serine 63. N6-acetyllysine is present on residues lysine 100 and lysine 119. The span at 104 to 143 (KMEANKENREAQMAAKLERLREKDKHVEEVRKNKESKDPA) shows a compositional bias: basic and acidic residues. Residues 104–149 (KMEANKENREAQMAAKLERLREKDKHVEEVRKNKESKDPADETEAD) are disordered.

The protein belongs to the stathmin family. Binds to two alpha/beta-tubulin heterodimers. Interacts with KIST. Many different phosphorylated forms are observed depending on specific combinations among the sites which can be phosphorylated. MAPK is responsible for the phosphorylation of stathmin in response to NGF. Phosphorylation at Ser-16 seems to be required for neuron polarization. In terms of tissue distribution, highly expressed in the lateral nucleus of the amygdala.

The protein resides in the cytoplasm. The protein localises to the cytoskeleton. Involved in the regulation of the microtubule (MT) filament system by destabilizing microtubules. Prevents assembly and promotes disassembly of microtubules. Phosphorylation at Ser-16 may be required for axon formation during neurogenesis. Involved in the control of the learned and innate fear. This is Stathmin (Stmn1) from Mus musculus (Mouse).